The chain runs to 251 residues: Ribosomal RNA small subunit methyltransferase J (251 aa).

Residues 100-101 (RD), 116-117 (ER), and Asp170 each bind S-adenosyl-L-methionine.

This sequence belongs to the methyltransferase superfamily. RsmJ family.

The protein resides in the cytoplasm. It catalyses the reaction guanosine(1516) in 16S rRNA + S-adenosyl-L-methionine = N(2)-methylguanosine(1516) in 16S rRNA + S-adenosyl-L-homocysteine + H(+). In terms of biological role, specifically methylates the guanosine in position 1516 of 16S rRNA. This Actinobacillus pleuropneumoniae serotype 3 (strain JL03) protein is Ribosomal RNA small subunit methyltransferase J.